The sequence spans 247 residues: C-type lectin domain family 7 member A (247 aa).

The Cytoplasmic segment spans residues 1 to 44 (MEYHPDLENLDEDGYTQLHFDSQSNTRIAVVSEKGSCAASPPWR). An ITAM-like motif is present at residues 15-18 (YTQL). The helical; Signal-anchor for type II membrane protein transmembrane segment at 45 to 65 (LIAVILGILCLVILVIAVVLG) threads the bilayer. The Extracellular segment spans residues 66–247 (TMAIWRSNSG…YSICEKKFSM (182 aa)). Asn91 carries N-linked (GlcNAc...) asparagine glycosylation. 3 disulfide bridges follow: Cys120–Cys131, Cys148–Cys241, and Cys220–Cys233. Residues 127–242 (YEKSCYLFSM…CSVPSYSICE (116 aa)) form the C-type lectin domain. 146 to 153 (RQCWQLGS) contributes to the (1,3-beta-D-glucosyl)n binding site. A divalent metal cation is bound by residues Lys157, Asp159, and Glu163. Glu195 lines the (1,3-beta-D-glucosyl)n pocket. Glu242 contacts a divalent metal cation.

In terms of assembly, homodimer. Interacts with SYK; participates in leukocyte activation in presence of fungal pathogens. Interacts with CD37; this interaction controls CLEC7A-mediated IL-6 production. As to quaternary structure, interacts with RANBP9. Phosphorylated on tyrosine residues in response to beta-glucan binding. As to expression, highly expressed in peripheral blood leukocytes and dendritic cells. Detected in spleen, bone marrow, lung, muscle, stomach and placenta.

The protein localises to the cell membrane. Its subcellular location is the cytoplasm. Functionally, lectin that functions as a pattern recognizing receptor (PRR) specific for beta-1,3-linked and beta-1,6-linked glucans, which constitute cell wall constituents from pathogenic bacteria and fungi. Necessary for the TLR2-mediated inflammatory response and activation of NF-kappa-B: upon beta-glucan binding, recruits SYK via its ITAM motif and promotes a signaling cascade that activates some CARD domain-BCL10-MALT1 (CBM) signalosomes, leading to the activation of NF-kappa-B and MAP kinase p38 (MAPK11, MAPK12, MAPK13 and/or MAPK14) pathways which stimulate expression of genes encoding pro-inflammatory cytokines and chemokines. Enhances cytokine production in macrophages and dendritic cells. Mediates production of reactive oxygen species in the cell. Mediates phagocytosis of C.albicans conidia. Binds T-cells in a way that does not involve their surface glycans and plays a role in T-cell activation. Stimulates T-cell proliferation. Induces phosphorylation of SCIMP after binding beta-glucans. The sequence is that of C-type lectin domain family 7 member A from Homo sapiens (Human).